A 58-amino-acid polypeptide reads, in one-letter code: Small ribosomal subunit protein bS21 (58 aa).

The segment covering 32 to 42 (ARRREHYEKPS) has biased composition (basic and acidic residues). The interval 32–58 (ARRREHYEKPSVRRKKKSEAARKRRWH) is disordered. The segment covering 43 to 58 (VRRKKKSEAARKRRWH) has biased composition (basic residues).

Belongs to the bacterial ribosomal protein bS21 family.

The chain is Small ribosomal subunit protein bS21 from Moorella thermoacetica (strain ATCC 39073 / JCM 9320).